Here is a 375-residue protein sequence, read N- to C-terminus: MAKQDYYELLGISRSADEKEIKRAYKKLAMQYHPDRTKGDKEKEEKFKEIQEAYEVLNDKEKRAAYDQYGHAAFEQGTGFGGGSFGGADFGDIFGDMFGDIFGGGGRGRQRVVRGDDLRYDIEITLEEAVKGTTKDIKIHTLAPCDTCHGTGAEAGSKVETCPHCHGAGRLRRQQGFFVTEQPCHFCHGTGKKIEKPCKTCHGDGRVNKAKNLSVKIPAGVDTGNQLRLSGEGAAGENGAPAGDLYVVIHVKEHHIFERDGSNLYCEVPISFTMAALGGEIEVPTLDGRVKLKIPEETQTGKLFRMRGKGVTSTRSGYAGDLTCRIIVETPVKLNEEQKELLRKLEESLEGQTKQRPKSSSFLDGVKRFFDDLTK.

In terms of domain architecture, J spans 5–70 (DYYELLGISR…EKRAAYDQYG (66 aa)). Residues 132–210 (GTTKDIKIHT…CHGDGRVNKA (79 aa)) form a CR-type zinc finger. Zn(2+) contacts are provided by cysteine 145, cysteine 148, cysteine 162, cysteine 165, cysteine 184, cysteine 187, cysteine 198, and cysteine 201. CXXCXGXG motif repeat units follow at residues 145-152 (CDTCHGTG), 162-169 (CPHCHGAG), 184-191 (CHFCHGTG), and 198-205 (CKTCHGDG).

The protein belongs to the DnaJ family. As to quaternary structure, homodimer. It depends on Zn(2+) as a cofactor.

It is found in the cytoplasm. Functionally, participates actively in the response to hyperosmotic and heat shock by preventing the aggregation of stress-denatured proteins and by disaggregating proteins, also in an autonomous, DnaK-independent fashion. Unfolded proteins bind initially to DnaJ; upon interaction with the DnaJ-bound protein, DnaK hydrolyzes its bound ATP, resulting in the formation of a stable complex. GrpE releases ADP from DnaK; ATP binding to DnaK triggers the release of the substrate protein, thus completing the reaction cycle. Several rounds of ATP-dependent interactions between DnaJ, DnaK and GrpE are required for fully efficient folding. Also involved, together with DnaK and GrpE, in the DNA replication of plasmids through activation of initiation proteins. The chain is Chaperone protein DnaJ from Aggregatibacter actinomycetemcomitans (Actinobacillus actinomycetemcomitans).